Consider the following 476-residue polypeptide: MIKTLFIILLCGILSACQPVDIQDVDIAAPAPKRTVLKVGTLYGPQIYLNSEQGESGFDFEMAQRFADYLAVPLEMIPYTNRKQLFAALKENKIDIIAAGIAKTPNRSQQFKLGPTLYKVNQVLVYKEGTPEPKDISTLSGEITVMANSSSVNTLTKLQKDYPELMWNQVNDKDNEELFALIANGELNYTISDSNSLLINQRFLPELRAGMILEEKVEVVWLLPPNNSDRLMSKLLAFWHKERRAGTLEHLNEKYFGHVKRFDYVDTRAFIRAIDNILPEYRSFFEEYSGELDWRKLAAASYQESHWNPSARSPTGVRGMMMLTQPTAAYVGVDDRLDAEQSIRGGAFYLKDMMERLPDTISEAQRIWFALASYNIGLGHVEDARRLTESMGMDPSAWRDVKKVLPLLQQSKYYKQTRYGYARGSEAVHYVDSIRRYYDTLVWIDNQTKTMEIIEEKEQVEVIAEEVPAKSHVSAQ.

A signal peptide spans 1–16 (MIKTLFIILLCGILSA). The non-LT domain stretch occupies residues 17–259 (CQPVDIQDVD…HLNEKYFGHV (243 aa)). Residues 260-476 (KRFDYVDTRA…VPAKSHVSAQ (217 aa)) form an LT domain region. The active site involves Glu-304.

It in the N-terminal section; belongs to the bacterial solute-binding protein 3 family. In the C-terminal section; belongs to the transglycosylase Slt family.

It is found in the cell outer membrane. It catalyses the reaction Exolytic cleavage of the (1-&gt;4)-beta-glycosidic linkage between N-acetylmuramic acid (MurNAc) and N-acetylglucosamine (GlcNAc) residues in peptidoglycan, from either the reducing or the non-reducing ends of the peptidoglycan chains, with concomitant formation of a 1,6-anhydrobond in the MurNAc residue.. Murein-degrading enzyme that degrades murein glycan strands and insoluble, high-molecular weight murein sacculi, with the concomitant formation of a 1,6-anhydromuramoyl product. Lytic transglycosylases (LTs) play an integral role in the metabolism of the peptidoglycan (PG) sacculus. Their lytic action creates space within the PG sacculus to allow for its expansion as well as for the insertion of various structures such as secretion systems and flagella. In Shewanella frigidimarina (strain NCIMB 400), this protein is Membrane-bound lytic murein transglycosylase F.